We begin with the raw amino-acid sequence, 835 residues long: Pre-mRNA-splicing factor SYF1 (835 aa).

10 HAT repeats span residues 7-38, 46-77, 313-348, 414-456, 458-494, 517-551, 589-623, 628-664, 707-741, and 743-777; these read YILD…HWEA, RSAR…WFRR, ADFD…FEQA, EDFD…VYWS, KSYE…NEFQ, SIID…LLES, NNLH…EVME, ATKE…FEIH, LGPD…LEMS, and SDYT…FELE.

The protein belongs to the crooked-neck family. In terms of assembly, associated with the spliceosome.

It localises to the nucleus. Functionally, involved in pre-mRNA splicing and cell cycle progression. The sequence is that of Pre-mRNA-splicing factor SYF1 (SYF1) from Candida glabrata (strain ATCC 2001 / BCRC 20586 / JCM 3761 / NBRC 0622 / NRRL Y-65 / CBS 138) (Yeast).